The following is a 750-amino-acid chain: Neprilysin (750 aa).

Residues 1 to 14 (MGKSESQMDITDIN) show a composition bias toward polar residues. The segment at 1–20 (MGKSESQMDITDINTPKPKK) is disordered. Residue G2 is the site of N-myristoyl glycine attachment. Topologically, residues 2–28 (GKSESQMDITDINTPKPKKKQRWTPLE) are cytoplasmic. Residues S4 and S6 each carry the phosphoserine modification. The Stop-transfer sequence motif lies at 16 to 23 (PKPKKKQR). Residues 29–51 (ISLSVLVLLLTIIAVTMIALYAT) traverse the membrane as a helical; Signal-anchor for type II membrane protein segment. The Extracellular portion of the chain corresponds to 52–750 (YDDGICKSSD…MNPEKKCRVW (699 aa)). The 695-residue stretch at 56–750 (ICKSSDCIKS…MNPEKKCRVW (695 aa)) folds into the Peptidase M13 domain. 6 disulfides stabilise this stretch: C57/C62, C80/C735, C88/C695, C143/C411, C234/C242, and C621/C747. An a peptide-binding site is contributed by R103. Residue N145 is glycosylated (N-linked (GlcNAc...) asparagine). N-linked (GlcNAc...) asparagine glycans are attached at residues N285 and N325. Zn(2+) is bound at residue H584. E585 is an active-site residue. H588 contacts Zn(2+). N628 carries N-linked (GlcNAc...) asparagine glycosylation. E647 is a Zn(2+) binding site. D651 functions as the Proton donor in the catalytic mechanism.

Belongs to the peptidase M13 family. Zn(2+) serves as cofactor. In terms of processing, myristoylation is a determinant of membrane targeting. Glycosylation at Asn-628 is necessary both for surface expression and neutral endopeptidase activity.

The protein resides in the cell membrane. The catalysed reaction is Preferential cleavage of polypeptides between hydrophobic residues, particularly with Phe or Tyr at P1'.. It carries out the reaction substance P + H2O = substance P(1-9) + L-Leu-L-Met-NH2. The enzyme catalyses substance P + H2O = substance P(1-7) + L-Phe-Gly-L-Leu-L-Met-NH2. It catalyses the reaction neurotensin + H2O = neurotensin(1-11) + L-isoleucyl-L-leucine. The catalysed reaction is neurotensin + H2O = neurotensin(1-10) + L-tyrosyl-L-isoleucyl-L-leucine. Its activity is regulated as follows. Inhibited in a dose dependent manner by opiorphin. Activated by K49-P1-20, a twenty-residue synthetic peptide shortened from the snake B.asper myotoxin II. Functionally, thermolysin-like specificity, but is almost confined on acting on polypeptides of up to 30 amino acids. Biologically important in the destruction of opioid peptides such as Met- and Leu-enkephalins by cleavage of a Gly-Phe bond. Catalyzes cleavage of bradykinin, substance P and neurotensin peptides. Able to cleave angiotensin-1, angiotensin-2 and angiotensin 1-9. Involved in the degradation of atrial natriuretic factor (ANF) and brain natriuretic factor (BNP(1-32)). Displays UV-inducible elastase activity toward skin preelastic and elastic fibers. The sequence is that of Neprilysin from Homo sapiens (Human).